The sequence spans 569 residues: Putative potassium-transporting ATPase ATP-binding subunit (569 aa).

2 consecutive transmembrane segments (helical) span residues 34–54 (PVMF…LAMV) and 58–78 (IAGS…TVLF). Asp-194 acts as the 4-aspartylphosphate intermediate in catalysis. Residues Asp-231, Glu-235, 264 to 271 (FTAQSRMS), and Lys-282 each bind ATP. Mg(2+) is bound by residues Asp-405 and Asp-409. Helical transmembrane passes span 475 to 495 (FAII…LNVM), 503 to 523 (AILS…PLAL), and 543 to 563 (IYGL…DVLL).

This sequence belongs to the cation transport ATPase (P-type) (TC 3.A.3) family. Type IA subfamily. The system is composed of three essential subunits: KdpA, KdpB and KdpC.

The protein resides in the cell inner membrane. It catalyses the reaction K(+)(out) + ATP + H2O = K(+)(in) + ADP + phosphate + H(+). Functionally, part of the high-affinity ATP-driven potassium transport (or Kdp) system, which catalyzes the hydrolysis of ATP coupled with the electrogenic transport of potassium into the cytoplasm. This subunit is responsible for energy coupling to the transport system and for the release of the potassium ions to the cytoplasm. This Salmonella typhi protein is Putative potassium-transporting ATPase ATP-binding subunit.